The following is a 349-amino-acid chain: Histidinol-phosphate aminotransferase (349 aa).

N6-(pyridoxal phosphate)lysine is present on K206.

Belongs to the class-II pyridoxal-phosphate-dependent aminotransferase family. Histidinol-phosphate aminotransferase subfamily. As to quaternary structure, homodimer. Requires pyridoxal 5'-phosphate as cofactor.

The catalysed reaction is L-histidinol phosphate + 2-oxoglutarate = 3-(imidazol-4-yl)-2-oxopropyl phosphate + L-glutamate. It participates in amino-acid biosynthesis; L-histidine biosynthesis; L-histidine from 5-phospho-alpha-D-ribose 1-diphosphate: step 7/9. This Hydrogenobaculum sp. (strain Y04AAS1) protein is Histidinol-phosphate aminotransferase.